Consider the following 290-residue polypeptide: Fructose-1,6-bisphosphatase class 1 (290 aa).

Mg(2+) is bound by residues Glu78, Asp96, Leu98, and Asp99. Residues 99-102, Tyr201, and Lys226 contribute to the substrate site; that span reads DGSS. Residue Glu232 participates in Mg(2+) binding.

The protein belongs to the FBPase class 1 family. In terms of assembly, homotetramer. It depends on Mg(2+) as a cofactor.

The protein resides in the cytoplasm. The enzyme catalyses beta-D-fructose 1,6-bisphosphate + H2O = beta-D-fructose 6-phosphate + phosphate. It functions in the pathway carbohydrate biosynthesis; gluconeogenesis. The protein is Fructose-1,6-bisphosphatase class 1 of Helicobacter pylori (strain J99 / ATCC 700824) (Campylobacter pylori J99).